Consider the following 291-residue polypeptide: T-cell leukemia homeobox protein 3 (291 aa).

Residues 1–51 form a disordered region; the sequence is MEAPASAQTPHPHEPISFGIDQILNSPDQDSAPAPRGPDGASYLGGPPGGR. Positions 166–225 form a DNA-binding region, homeobox; it reads RKKPRTSFSRVQICELEKRFHRQKYLASAERAALAKSLKMTDAQVKTWFQNRRTKWRRQT.

It localises to the nucleus. The protein is T-cell leukemia homeobox protein 3 (Tlx3) of Mus musculus (Mouse).